Here is a 488-residue protein sequence, read N- to C-terminus: Phenylalanine--tRNA ligase alpha subunit (488 aa).

L-phenylalanine is bound by residues Thr332, Gln371–Asp373, and Phe410. Glu412 lines the Mg(2+) pocket. Phe435 lines the L-phenylalanine pocket.

Belongs to the class-II aminoacyl-tRNA synthetase family. Phe-tRNA synthetase alpha subunit type 2 subfamily. In terms of assembly, tetramer of two alpha and two beta subunits. Mg(2+) serves as cofactor.

It is found in the cytoplasm. It catalyses the reaction tRNA(Phe) + L-phenylalanine + ATP = L-phenylalanyl-tRNA(Phe) + AMP + diphosphate + H(+). This Aeropyrum pernix (strain ATCC 700893 / DSM 11879 / JCM 9820 / NBRC 100138 / K1) protein is Phenylalanine--tRNA ligase alpha subunit.